The sequence spans 397 residues: Acetate kinase (397 aa).

Asn8 serves as a coordination point for Mg(2+). Lys15 lines the ATP pocket. Arg89 contacts substrate. The active-site Proton donor/acceptor is Asp146. ATP contacts are provided by residues 206–210 (HVGNG), 283–285 (DMR), and 331–335 (GMGEN). A Mg(2+)-binding site is contributed by Glu383.

The protein belongs to the acetokinase family. Homodimer. Mg(2+) is required as a cofactor. It depends on Mn(2+) as a cofactor.

The protein resides in the cytoplasm. The enzyme catalyses acetate + ATP = acetyl phosphate + ADP. It participates in metabolic intermediate biosynthesis; acetyl-CoA biosynthesis; acetyl-CoA from acetate: step 1/2. Catalyzes the formation of acetyl phosphate from acetate and ATP. Can also catalyze the reverse reaction. In Streptococcus agalactiae serotype Ia (strain ATCC 27591 / A909 / CDC SS700), this protein is Acetate kinase.